We begin with the raw amino-acid sequence, 273 residues long: Nitrogenase iron protein (273 aa).

Residue 8 to 15 (GKGGIGKS) coordinates ATP. Cysteine 95 serves as a coordination point for [4Fe-4S] cluster. Residue arginine 98 is modified to ADP-ribosylarginine; by dinitrogenase reductase ADP-ribosyltransferase. A [4Fe-4S] cluster-binding site is contributed by cysteine 130.

Belongs to the NifH/BchL/ChlL family. Homodimer. [4Fe-4S] cluster is required as a cofactor. The reversible ADP-ribosylation of Arg-98 inactivates the nitrogenase reductase and regulates nitrogenase activity.

The catalysed reaction is N2 + 8 reduced [2Fe-2S]-[ferredoxin] + 16 ATP + 16 H2O = H2 + 8 oxidized [2Fe-2S]-[ferredoxin] + 2 NH4(+) + 16 ADP + 16 phosphate + 6 H(+). In terms of biological role, the key enzymatic reactions in nitrogen fixation are catalyzed by the nitrogenase complex, which has 2 components: the iron protein and the molybdenum-iron protein. The sequence is that of Nitrogenase iron protein from Roseiflexus castenholzii (strain DSM 13941 / HLO8).